An 84-amino-acid polypeptide reads, in one-letter code: Delta-thalatoxin-Tas1a (84 aa).

A signal peptide spans 1 to 19 (MAYLKIVLVALMLVLAVSA). A propeptide spanning residues 20–33 (MRRPDQQDQDISVA) is cleaved from the precursor. 3 disulfide bridges follow: Cys-38–Cys-78, Cys-40–Cys-68, and Cys-61–Cys-79.

Belongs to the sea anemone sodium channel inhibitory toxin family. Type II subfamily.

It localises to the secreted. It is found in the nematocyst. In terms of biological role, binds specifically to the voltage-gated sodium channel (Nav) and delays its inactivation. This is Delta-thalatoxin-Tas1a from Thalassianthus aster (Fuzzy-tipped anemone).